A 299-amino-acid polypeptide reads, in one-letter code: Zinc import ATP-binding protein ZnuC (299 aa).

The region spanning 13–228 (VSLANAGVQR…PEYMRLFGGT (216 aa)) is the ABC transporter domain. Residue 45–52 (GPNGSGKS) participates in ATP binding.

The protein belongs to the ABC transporter superfamily. Zinc importer (TC 3.A.1.15.5) family. As to quaternary structure, the complex is composed of two ATP-binding proteins (ZnuC), two transmembrane proteins (ZnuB) and a solute-binding protein (ZnuA).

It is found in the cell inner membrane. The enzyme catalyses Zn(2+)(out) + ATP(in) + H2O(in) = Zn(2+)(in) + ADP(in) + phosphate(in) + H(+)(in). Functionally, part of the ABC transporter complex ZnuABC involved in zinc import. Responsible for energy coupling to the transport system. This is Zinc import ATP-binding protein ZnuC from Agrobacterium fabrum (strain C58 / ATCC 33970) (Agrobacterium tumefaciens (strain C58)).